The sequence spans 145 residues: 3-hydroxyacyl-[acyl-carrier-protein] dehydratase FabZ (145 aa).

His-51 is an active-site residue.

The protein belongs to the thioester dehydratase family. FabZ subfamily.

It is found in the cytoplasm. The catalysed reaction is a (3R)-hydroxyacyl-[ACP] = a (2E)-enoyl-[ACP] + H2O. Involved in unsaturated fatty acids biosynthesis. Catalyzes the dehydration of short chain beta-hydroxyacyl-ACPs and long chain saturated and unsaturated beta-hydroxyacyl-ACPs. The sequence is that of 3-hydroxyacyl-[acyl-carrier-protein] dehydratase FabZ from Macrococcus caseolyticus (strain JCSC5402) (Macrococcoides caseolyticum).